Consider the following 501-residue polypeptide: Serine/threonine protein phosphatase 2A 55 kDa regulatory subunit B beta isoform (501 aa).

Met1 carries the N-acetylmethionine modification. WD repeat units lie at residues 34 to 73 (QEVDIISAIEFDKSGDHLATGDRGGRVVLFERTDTKDHGG), 110 to 151 (EIEE…IKKI), 220 to 258 (AHDYHINSISNSSDGETFISADDLRVNLWNLEISNQSFN), 269 to 309 (DLTE…LCDS), and 328 to 366 (EIIASISDIKFSKDGRYILSRDYMTLKLWDINMDSGPVA). A compositionally biased stretch (polar residues) spans 439–449 (TPARPSRSIGS). A disordered region spans residues 439–466 (TPARPSRSIGSMTRVVRRGSESPGTEAN). The WD 6 repeat unit spans residues 471–501 (DFTTKLLHMAWHPTENSIACAAANSLYMYYA).

The protein belongs to the phosphatase 2A regulatory subunit B family. As to quaternary structure, PP2A consists of a common heteromeric enzyme, composed of a catalytic subunit (subunits C), a constant regulatory subunit (subunit A), and a variety of regulatory subunits such as subunits B (the R2/B/PR55/B55, R3/B''/PR72/PR130/PR59 and R5/B'/B56 families). Interacts with SIC/RON3. In terms of tissue distribution, expressed ubiquitously.

Functionally, the B regulatory subunit may modulate substrate selectivity and catalytic activity, and may also direct the localization of the catalytic enzyme to a particular subcellular compartment. The polypeptide is Serine/threonine protein phosphatase 2A 55 kDa regulatory subunit B beta isoform (PP2AB2) (Arabidopsis thaliana (Mouse-ear cress)).